A 398-amino-acid chain; its full sequence is Phosphoglycerate kinase (398 aa).

Residues 21-23 (DFN), R36, 59-62 (HLGR), R119, and R157 each bind substrate. ATP is bound by residues K208, G296, E327, and 354–357 (GGDS).

Belongs to the phosphoglycerate kinase family. Monomer.

Its subcellular location is the cytoplasm. The catalysed reaction is (2R)-3-phosphoglycerate + ATP = (2R)-3-phospho-glyceroyl phosphate + ADP. It functions in the pathway carbohydrate degradation; glycolysis; pyruvate from D-glyceraldehyde 3-phosphate: step 2/5. The protein is Phosphoglycerate kinase of Streptococcus agalactiae serotype Ia (strain ATCC 27591 / A909 / CDC SS700).